We begin with the raw amino-acid sequence, 272 residues long: UPF0759 protein YecE (272 aa).

Belongs to the UPF0759 family.

This is UPF0759 protein YecE (yecE) from Escherichia coli (strain K12).